A 767-amino-acid polypeptide reads, in one-letter code: Phosphoribosylformylglycinamidine synthase subunit PurL (767 aa).

His65 is a catalytic residue. Residues Tyr68 and Lys112 each contribute to the ATP site. Glu114 contacts Mg(2+). Substrate is bound by residues 115–118 and Arg137; that span reads SHNH. Residue His116 is the Proton acceptor of the active site. Mg(2+) is bound at residue Asp138. Gln262 lines the substrate pocket. Asp290 serves as a coordination point for Mg(2+). 334–336 provides a ligand contact to substrate; it reads ESQ. Residues Asp522 and Gly559 each contribute to the ATP site. Residue Asn560 coordinates Mg(2+). Residue Ser562 coordinates substrate.

The protein belongs to the FGAMS family. As to quaternary structure, monomer. Part of the FGAM synthase complex composed of 1 PurL, 1 PurQ and 2 PurS subunits.

It is found in the cytoplasm. The catalysed reaction is N(2)-formyl-N(1)-(5-phospho-beta-D-ribosyl)glycinamide + L-glutamine + ATP + H2O = 2-formamido-N(1)-(5-O-phospho-beta-D-ribosyl)acetamidine + L-glutamate + ADP + phosphate + H(+). It participates in purine metabolism; IMP biosynthesis via de novo pathway; 5-amino-1-(5-phospho-D-ribosyl)imidazole from N(2)-formyl-N(1)-(5-phospho-D-ribosyl)glycinamide: step 1/2. In terms of biological role, part of the phosphoribosylformylglycinamidine synthase complex involved in the purines biosynthetic pathway. Catalyzes the ATP-dependent conversion of formylglycinamide ribonucleotide (FGAR) and glutamine to yield formylglycinamidine ribonucleotide (FGAM) and glutamate. The FGAM synthase complex is composed of three subunits. PurQ produces an ammonia molecule by converting glutamine to glutamate. PurL transfers the ammonia molecule to FGAR to form FGAM in an ATP-dependent manner. PurS interacts with PurQ and PurL and is thought to assist in the transfer of the ammonia molecule from PurQ to PurL. In Renibacterium salmoninarum (strain ATCC 33209 / DSM 20767 / JCM 11484 / NBRC 15589 / NCIMB 2235), this protein is Phosphoribosylformylglycinamidine synthase subunit PurL.